The following is a 148-amino-acid chain: 3-hydroxyacyl-[acyl-carrier-protein] dehydratase FabZ (148 aa).

Residue His-48 is part of the active site.

This sequence belongs to the thioester dehydratase family. FabZ subfamily.

The protein resides in the cytoplasm. The enzyme catalyses a (3R)-hydroxyacyl-[ACP] = a (2E)-enoyl-[ACP] + H2O. Functionally, involved in unsaturated fatty acids biosynthesis. Catalyzes the dehydration of short chain beta-hydroxyacyl-ACPs and long chain saturated and unsaturated beta-hydroxyacyl-ACPs. In Campylobacter curvus (strain 525.92), this protein is 3-hydroxyacyl-[acyl-carrier-protein] dehydratase FabZ.